Reading from the N-terminus, the 378-residue chain is Chaperone protein DnaJ (378 aa).

Residues 5–70 form the J domain; the sequence is DYYEVLGLQK…EKRAMYDQYG (66 aa). A CR-type zinc finger spans residues 135–213; the sequence is GVKKDIRIRT…CHGDGRVEKT (79 aa). Cys-148, Cys-151, Cys-165, Cys-168, Cys-187, Cys-190, Cys-201, and Cys-204 together coordinate Zn(2+). CXXCXGXG motif repeat units follow at residues 148–155, 165–172, 187–194, and 201–208; these read CDTCHGSG, CPHCHGSG, CPSCHGTG, and CKSCHGDG.

This sequence belongs to the DnaJ family. As to quaternary structure, homodimer. The cofactor is Zn(2+).

It is found in the cytoplasm. Participates actively in the response to hyperosmotic and heat shock by preventing the aggregation of stress-denatured proteins and by disaggregating proteins, also in an autonomous, DnaK-independent fashion. Unfolded proteins bind initially to DnaJ; upon interaction with the DnaJ-bound protein, DnaK hydrolyzes its bound ATP, resulting in the formation of a stable complex. GrpE releases ADP from DnaK; ATP binding to DnaK triggers the release of the substrate protein, thus completing the reaction cycle. Several rounds of ATP-dependent interactions between DnaJ, DnaK and GrpE are required for fully efficient folding. Also involved, together with DnaK and GrpE, in the DNA replication of plasmids through activation of initiation proteins. The polypeptide is Chaperone protein DnaJ (Glaesserella parasuis serovar 5 (strain SH0165) (Haemophilus parasuis)).